Consider the following 369-residue polypeptide: Nuclear hormone receptor family member nhr-64 (369 aa).

Residues 67–142 (EKCQVDKAKR…ASTRGLRTTV (76 aa)) constitute a DNA-binding region (nuclear receptor). 2 consecutive NR C4-type zinc fingers follow at residues 70-90 (QVDK…CLRK) and 106-130 (PANP…TLIR). Residues 120–352 (PDDPLLDTLI…NLMLELMLPN (233 aa)) form the NR LBD domain.

It belongs to the nuclear hormone receptor family.

The protein resides in the nucleus. Functionally, orphan nuclear receptor. This is Nuclear hormone receptor family member nhr-64 (nhr-64) from Caenorhabditis elegans.